Consider the following 806-residue polypeptide: Mitogen-activated protein kinase 7 (806 aa).

A disordered region spans residues 1–23 (MAEPLKEEDGEDGSGEPPGRVKA). Position 2 is an N-acetylalanine (alanine 2). Residues 2–77 (AEPLKEEDGE…VVSSARRRLT (76 aa)) are required for cytoplasmic targeting. The 293-residue stretch at 55 to 347 (YEIIETIGNG…AAAALRHPFL (293 aa)) folds into the Protein kinase domain. Residues 61 to 69 (IGNGAYGVV) and lysine 84 each bind ATP. The interval 78–139 (GQQVAIKKIP…FRSVYVVLDL (62 aa)) is required for binding to MAP2K5. A necessary for oligomerization region spans residues 140–406 (MESDLHQIIH…QQIRFQPSLQ (267 aa)). The active-site Proton acceptor is aspartate 182. The TXY motif lies at 219-221 (TEY). The segment at 407-806 (PVASEPVCPD…LSDLPDLQEP (400 aa)) is may not be required for kinase activity; required to stimulate MEF2C activity. Disordered stretches follow at residues 424–475 (APSG…SDNT) and 488–727 (RSRL…PKGS). Residues 433–443 (SPPPALPPCSG) show a composition bias toward pro residues. Basic and acidic residues-rich tracts occupy residues 502-519 (PEPR…EREE), 527-544 (RAKE…KERG), and 563-573 (DNDRSLLERWT). The short motif at 505-539 (RKPVTAQERQREREEKRRRRQERAKEREKRRQERE) is the Nuclear localization signal element. 2 stretches are compositionally biased toward pro residues: residues 578–592 (PPVP…PTPK) and 627–643 (VCPP…PVPA). Residues 647 to 660 (TAPSTSLLASQSLV) show a composition bias toward polar residues. The span at 678 to 689 (PSGPPPPDPGLT) shows a compositional bias: pro residues. Polar residues predominate over residues 693–710 (STSESPDVNLVTQQLSKS). The residue at position 710 (serine 710) is a Phosphoserine. Threonine 723 bears the Phosphothreonine mark.

Belongs to the protein kinase superfamily. CMGC Ser/Thr protein kinase family. MAP kinase subfamily. In terms of assembly, interacts with MAP2K5. Forms oligomers. Interacts with MEF2A, MEF2C and MEF2D; the interaction phosphorylates the MEF2s and enhances transcriptional activity of MEF2A, MEF2C but not MEF2D. Interacts with SGK1. Interacts with PML. Interacts (via N-terminal half) with HSP90AB1-CDC37 chaperone complex in resting cells; the interaction is MAP2K5-independent and prevents MAPK7 from ubiquitination and proteasomal degradation. Interacts with STUB1/CHIP; the interaction is enhanced in the presence of IGF1 or MAP2K5 and promotes STUB1/CHIP E3 ligase activity. Requires Mg(2+) as cofactor. In terms of processing, dually phosphorylated on Thr-219 and Tyr-221, which activates the enzyme.

It is found in the cytoplasm. The protein localises to the nucleus. The protein resides in the PML body. The catalysed reaction is L-seryl-[protein] + ATP = O-phospho-L-seryl-[protein] + ADP + H(+). It catalyses the reaction L-threonyl-[protein] + ATP = O-phospho-L-threonyl-[protein] + ADP + H(+). Its activity is regulated as follows. Activated by tyrosine and threonine phosphorylation. Activated in response to hyperosmolarity, hydrogen peroxide, and epidermal growth factor (EGF). In terms of biological role, plays a role in various cellular processes such as proliferation, differentiation and cell survival. The upstream activator of MAPK7 is the MAPK kinase MAP2K5. Upon activation, it translocates to the nucleus and phosphorylates various downstream targets including MEF2C. EGF activates MAPK7 through a Ras-independent and MAP2K5-dependent pathway. As part of the MAPK/ERK signaling pathway, acts as a negative regulator of apoptosis in cardiomyocytes via interaction with STUB1/CHIP and promotion of STUB1-mediated ubiquitination and degradation of ICER-type isoforms of CREM. May have a role in muscle cell differentiation. May be important for endothelial function and maintenance of blood vessel integrity. MAP2K5 and MAPK7 interact specifically with one another and not with MEK1/ERK1 or MEK2/ERK2 pathways. Phosphorylates SGK1 at Ser-78 and this is required for growth factor-induced cell cycle progression. Involved in the regulation of p53/TP53 by disrupting the PML-MDM2 interaction. The protein is Mitogen-activated protein kinase 7 (Mapk7) of Rattus norvegicus (Rat).